A 189-amino-acid polypeptide reads, in one-letter code: Movement protein (189 aa).

It belongs to the tombusvirus/aureusvirus movement protein p22 family. Interacts with host protein HFI22. Post-translationally, phosphorylated.

The protein resides in the host membrane. Functionally, transports viral genome to neighboring plant cells directly through plasmosdesmata, without any budding. The movement protein allows efficient cell to cell propagation, by bypassing the host cell wall barrier. The sequence is that of Movement protein from Tomato bushy stunt virus (strain BS-3) (TBSV).